We begin with the raw amino-acid sequence, 187 residues long: UPF0301 protein Cpha266_0885 (187 aa).

The protein belongs to the UPF0301 (AlgH) family.

In Chlorobium phaeobacteroides (strain DSM 266 / SMG 266 / 2430), this protein is UPF0301 protein Cpha266_0885.